The chain runs to 544 residues: CRISPR-associated endodeoxyribonuclease Cas12f2 (544 aa).

The segment at 1-195 (MNMSKTTISV…KPNERETRYV (195 aa)) is recognition domain (REC). The tract at residues 196 to 326 (HISKLESPSK…YLQYTYEAEV (131 aa)) is wedge domain (WED). Positions 327–334 (EANKEYAG) are linker. The tract at residues 335-485 (CLGVDIGCSK…VYVKPDYTSQ (151 aa)) is ruvC-I. Residues aspartate 339 and glutamate 430 contribute to the active site. Residues 486–520 (TCSSCGADKEKTERPSQAIFRCLNPTCRYYQRDIN) form a target nucleic acid-binding (TNB) region. Zn(2+) is bound by residues cysteine 487, cysteine 490, cysteine 507, and cysteine 512. A ruvC-II region spans residues 521 to 541 (ADFNAAVNIAKKALNNTEVVT). Residue aspartate 522 is part of the active site.

This sequence belongs to the CRISPR-associated endonuclease Cas12f family. In terms of assembly, an asymmetric homodimer. Guide RNA is probably required for dimerization. The cofactor is Mg(2+). Requires Zn(2+) as cofactor.

Its function is as follows. CRISPR (clustered regularly interspaced short palindromic repeat), is an adaptive immune system that provides protection against mobile genetic elements (viruses, transposable elements and conjugative plasmids). CRISPR clusters contain sequences complementary to antecedent mobile elements and target invading nucleic acids. CRISPR clusters are transcribed and processed into CRISPR RNA (crRNA), which requires a trans-encoded small RNA (tracrRNA), but not this protein (in vitro). Recognizes a short motif in the CRISPR repeat sequences (the 5' PAM or protospacer adjacent motif, TTAT in this organism) to help distinguish self versus nonself, as targets within the CRISPR locus do not have PAMs. Upon expression in E.coli of this protein, a mini CRISPR array and the probable tracrRNA, has dsDNA endonuclease activity. DNA cleavage is centered around positions 21 base pairs 3' of PAM. The mini system does not protect E.coli against transformation by foreign plasmids. The sequence is that of CRISPR-associated endodeoxyribonuclease Cas12f2 from Micrarchaeota archaeon (strain CG1_02_47_40).